The following is a 383-amino-acid chain: Protein COS5 (383 aa).

The Cytoplasmic portion of the chain corresponds to Met-1–Glu-42. Residues Ile-43–Trp-63 form a helical membrane-spanning segment. Residues Lys-64–Pro-72 lie on the Extracellular side of the membrane. A helical transmembrane segment spans residues Leu-73–Leu-93. At Ser-94–Arg-232 the chain is on the cytoplasmic side. A helical transmembrane segment spans residues Ile-233–Gln-253. Residue His-254 is a topological domain, extracellular. Residues Phe-255–Phe-275 form a helical membrane-spanning segment. Residues Gln-276–Lys-383 are Cytoplasmic-facing.

This sequence belongs to the DUP/COS family.

It is found in the membrane. In Saccharomyces cerevisiae (strain ATCC 204508 / S288c) (Baker's yeast), this protein is Protein COS5 (COS5).